We begin with the raw amino-acid sequence, 142 residues long: UPF0102 protein Bamb_0202 (142 aa).

A disordered region spans residues 1–23 (MCHAAPAAPASGRGLPHGGGNFS).

Belongs to the UPF0102 family.

The protein is UPF0102 protein Bamb_0202 of Burkholderia ambifaria (strain ATCC BAA-244 / DSM 16087 / CCUG 44356 / LMG 19182 / AMMD) (Burkholderia cepacia (strain AMMD)).